Here is a 345-residue protein sequence, read N- to C-terminus: Holliday junction branch migration complex subunit RuvB (345 aa).

Positions 1-182 (MDQRIIASSS…FGIVQRLEFY (182 aa)) are large ATPase domain (RuvB-L). ATP-binding positions include isoleucine 21, arginine 22, glycine 63, lysine 66, threonine 67, threonine 68, 129–131 (EDF), arginine 172, tyrosine 182, and arginine 219. Threonine 67 serves as a coordination point for Mg(2+). Positions 183-253 (SPQELTRIVI…VAQAAMQMLK (71 aa)) are small ATPAse domain (RuvB-S). The interval 256 to 345 (PEGFDELDRR…PGIGEPGDLF (90 aa)) is head domain (RuvB-H). Positions 292, 311, and 316 each coordinate DNA.

It belongs to the RuvB family. Homohexamer. Forms an RuvA(8)-RuvB(12)-Holliday junction (HJ) complex. HJ DNA is sandwiched between 2 RuvA tetramers; dsDNA enters through RuvA and exits via RuvB. An RuvB hexamer assembles on each DNA strand where it exits the tetramer. Each RuvB hexamer is contacted by two RuvA subunits (via domain III) on 2 adjacent RuvB subunits; this complex drives branch migration. In the full resolvosome a probable DNA-RuvA(4)-RuvB(12)-RuvC(2) complex forms which resolves the HJ.

It localises to the cytoplasm. The enzyme catalyses ATP + H2O = ADP + phosphate + H(+). Functionally, the RuvA-RuvB-RuvC complex processes Holliday junction (HJ) DNA during genetic recombination and DNA repair, while the RuvA-RuvB complex plays an important role in the rescue of blocked DNA replication forks via replication fork reversal (RFR). RuvA specifically binds to HJ cruciform DNA, conferring on it an open structure. The RuvB hexamer acts as an ATP-dependent pump, pulling dsDNA into and through the RuvAB complex. RuvB forms 2 homohexamers on either side of HJ DNA bound by 1 or 2 RuvA tetramers; 4 subunits per hexamer contact DNA at a time. Coordinated motions by a converter formed by DNA-disengaged RuvB subunits stimulates ATP hydrolysis and nucleotide exchange. Immobilization of the converter enables RuvB to convert the ATP-contained energy into a lever motion, pulling 2 nucleotides of DNA out of the RuvA tetramer per ATP hydrolyzed, thus driving DNA branch migration. The RuvB motors rotate together with the DNA substrate, which together with the progressing nucleotide cycle form the mechanistic basis for DNA recombination by continuous HJ branch migration. Branch migration allows RuvC to scan DNA until it finds its consensus sequence, where it cleaves and resolves cruciform DNA. In Xanthomonas oryzae pv. oryzae (strain MAFF 311018), this protein is Holliday junction branch migration complex subunit RuvB.